The sequence spans 666 residues: Fructose-1,6-bisphosphatase class 3 (666 aa).

The protein belongs to the FBPase class 3 family. Requires Mn(2+) as cofactor.

It carries out the reaction beta-D-fructose 1,6-bisphosphate + H2O = beta-D-fructose 6-phosphate + phosphate. The protein operates within carbohydrate biosynthesis; gluconeogenesis. In Phocaeicola vulgatus (strain ATCC 8482 / DSM 1447 / JCM 5826 / CCUG 4940 / NBRC 14291 / NCTC 11154) (Bacteroides vulgatus), this protein is Fructose-1,6-bisphosphatase class 3.